Here is a 220-residue protein sequence, read N- to C-terminus: 7-cyano-7-deazaguanine synthase (220 aa).

Residue 10-20 (FSGGQDSTTCL) coordinates ATP. Zn(2+) is bound by residues Cys186, Cys195, Cys198, and Cys201.

The protein belongs to the QueC family. In terms of assembly, homodimer. Requires Zn(2+) as cofactor.

It catalyses the reaction 7-carboxy-7-deazaguanine + NH4(+) + ATP = 7-cyano-7-deazaguanine + ADP + phosphate + H2O + H(+). Its pathway is purine metabolism; 7-cyano-7-deazaguanine biosynthesis. Catalyzes the ATP-dependent conversion of 7-carboxy-7-deazaguanine (CDG) to 7-cyano-7-deazaguanine (preQ(0)). The protein is 7-cyano-7-deazaguanine synthase of Bacillus thuringiensis (strain Al Hakam).